A 474-amino-acid chain; its full sequence is MRRVVRQSKFRHVFGQAVKNDQCYDDIRVSRVTWDSSFCAVNPRFVAIIIEASGGGAFLVLPLHKTGRIDKSYPTVCGHTGPVLDIDWCPHNDQVIASGSEDCTVMVWQIPENGLTLSLTEPVVILEGHSKRVGIVAWHPTARNVLLSAGCDNAIIIWNVGTGEALINLDDMHSDMIYNVSWSRNGSLICTASKDKKVRVIDPRKQEIVAEKEKAHEGARPMRAIFLADGNVFTTGFSRMSERQLALWNPKNMQEPIALHEMDTSNGVLLPFYDPDTSIIYLCGKGDSSIRYFEITDESPYVHYLNTFSSKEPQRGMGYMPKRGLDVNKCEIARFFKLHERKCEPIIMTVPRKSDLFQDDLYPDTAGPEAALEAEEWFEGKNADPILISLKHGYIPGKNRDLKVVKKNILDSKPAANKKSELSCAPKKPTDTASVQNEAKLDEILKEIKSIKETICSQDERISKLEQQLAKMAA.

WD repeat units follow at residues 78-118 (GHTG…LTLS), 128-168 (GHSK…ALIN), 172-202 (MHSD…RVID), 215-249 (AHEG…ALWN), and 263-303 (DTSN…PYVH). Residues 435–474 (VQNEAKLDEILKEIKSIKETICSQDERISKLEQQLAKMAA) are a coiled coil. N6-acetyllysine is present on Lys446.

It belongs to the WD repeat coronin family. In terms of assembly, homotrimer. Binds F-actin. Interacts with RCC2. Interacts preferentially with nucleotide-free and GDP-bound RAC1. Interacts with VIM (via head domain). Interacts with MICAL2; this interaction recruits MICAL2 to the actin filaments. Detected in skeletal muscle (at protein level). Detected in fibroblasts (at protein level). Ubiquitous.

It is found in the cell membrane. The protein localises to the cell projection. The protein resides in the lamellipodium. Its subcellular location is the ruffle membrane. It localises to the cytoplasm. It is found in the cytoskeleton. The protein localises to the cell cortex. The protein resides in the endosome membrane. In terms of biological role, plays a role in directed cell migration by regulating the activation and subcellular location of RAC1. Increases the presence of activated RAC1 at the leading edge of migrating cells. Required for normal organization of the cytoskeleton, including the actin cytoskeleton, microtubules and the vimentin intermediate filaments. Required for normal cell proliferation, cell migration, and normal formation of lamellipodia. Plays a role in endoplasmic reticulum-associated endosome fission: localizes to endosome membrane tubules and promotes recruitment of TMCC1, leading to recruitment of the endoplasmic reticulum to endosome tubules for fission. Endosome membrane fission of early and late endosomes is essential to separate regions destined for lysosomal degradation from carriers to be recycled to the plasma membrane. Required for normal distribution of mitochondria within cells. This chain is Coronin-1C (Coro1c), found in Mus musculus (Mouse).